A 334-amino-acid chain; its full sequence is Protein-methionine-sulfoxide reductase catalytic subunit MsrP (334 aa).

Positions 1 to 44 form a signal peptide, tat-type signal; the sequence is MKKVSRLTEADVTAESAFFMQRRQVLKALGITTAALSLPTAAHA. Mo-molybdopterin is bound by residues Asn88, 91–92, Cys146, Thr181, Asn233, Arg238, and 249–251; these read YE and GIK.

The protein belongs to the MsrP family. As to quaternary structure, heterodimer of a catalytic subunit (MsrP) and a heme-binding subunit (MsrQ). It depends on Mo-molybdopterin as a cofactor. Post-translationally, predicted to be exported by the Tat system. The position of the signal peptide cleavage has not been experimentally proven.

The protein localises to the periplasm. It carries out the reaction L-methionyl-[protein] + a quinone + H2O = L-methionyl-(S)-S-oxide-[protein] + a quinol. The catalysed reaction is L-methionyl-[protein] + a quinone + H2O = L-methionyl-(R)-S-oxide-[protein] + a quinol. Functionally, part of the MsrPQ system that repairs oxidized periplasmic proteins containing methionine sulfoxide residues (Met-O), using respiratory chain electrons. Thus protects these proteins from oxidative-stress damage caused by reactive species of oxygen and chlorine generated by the host defense mechanisms. MsrPQ is essential for the maintenance of envelope integrity under bleach stress, rescuing a wide series of structurally unrelated periplasmic proteins from methionine oxidation. The catalytic subunit MsrP is non-stereospecific, being able to reduce both (R-) and (S-) diastereoisomers of methionine sulfoxide. In Cronobacter sakazakii (strain ATCC BAA-894) (Enterobacter sakazakii), this protein is Protein-methionine-sulfoxide reductase catalytic subunit MsrP.